Reading from the N-terminus, the 80-residue chain is Putative membrane protein insertion efficiency factor (80 aa).

Positions 61 to 80 are disordered; that stretch reads KTGKDPVPDHFSLKRNQEGE. A compositionally biased stretch (basic and acidic residues) spans 62-80; sequence TGKDPVPDHFSLKRNQEGE.

Belongs to the UPF0161 family.

It localises to the cell membrane. Could be involved in insertion of integral membrane proteins into the membrane. This is Putative membrane protein insertion efficiency factor from Streptococcus pneumoniae serotype 2 (strain D39 / NCTC 7466).